We begin with the raw amino-acid sequence, 432 residues long: Transcobalamin-2 (432 aa).

The N-terminal stretch at 1 to 18 (MGHLGALLFLLGGLGALA) is a signal peptide. Intrachain disulfides connect Cys-21/Cys-270, Cys-116/Cys-312, and Cys-165/Cys-208. A glycan (N-linked (GlcNAc...) asparagine) is linked at Asn-94. Cob(II)alamin-binding positions include Gln-104, 152–156 (TSYYQ), His-193, 193–197 (HVSVD), Asn-245, Ser-248, Gln-294, and 400–402 (WQV).

This sequence belongs to the eukaryotic cobalamin transport proteins family. As to quaternary structure, interacts with CD320 (via LDL-receptor class A domains). In terms of tissue distribution, expressed in mammary gland, kidney, lymphatic nodes and liver.

The protein resides in the secreted. In terms of biological role, primary vitamin B12-binding and transport protein. Delivers cobalamin to cells. The chain is Transcobalamin-2 (TCN2) from Bos taurus (Bovine).